The primary structure comprises 605 residues: Elongation factor 4 (605 aa).

A tr-type G domain is found at 9–192 (GMIRNFCIIA…AIVARVPAPA (184 aa)). GTP contacts are provided by residues 21–26 (DHGKST) and 139–142 (NKID).

This sequence belongs to the TRAFAC class translation factor GTPase superfamily. Classic translation factor GTPase family. LepA subfamily.

The protein localises to the cell inner membrane. It carries out the reaction GTP + H2O = GDP + phosphate + H(+). Its function is as follows. Required for accurate and efficient protein synthesis under certain stress conditions. May act as a fidelity factor of the translation reaction, by catalyzing a one-codon backward translocation of tRNAs on improperly translocated ribosomes. Back-translocation proceeds from a post-translocation (POST) complex to a pre-translocation (PRE) complex, thus giving elongation factor G a second chance to translocate the tRNAs correctly. Binds to ribosomes in a GTP-dependent manner. The chain is Elongation factor 4 from Chlorobaculum tepidum (strain ATCC 49652 / DSM 12025 / NBRC 103806 / TLS) (Chlorobium tepidum).